The chain runs to 218 residues: Adenylate kinase (218 aa).

Glycine 10 to threonine 15 contacts ATP. The interval serine 30–valine 59 is NMP. AMP contacts are provided by residues threonine 31, arginine 36, glutamine 57–valine 59, glycine 85–arginine 88, and glutamine 92. The LID stretch occupies residues glycine 122 to aspartate 159. Residues arginine 123 and threonine 132–tyrosine 133 each bind ATP. A disordered region spans residues proline 127 to glutamate 151. The AMP site is built by arginine 156 and arginine 167. ATP is bound at residue glycine 203.

This sequence belongs to the adenylate kinase family. In terms of assembly, monomer.

Its subcellular location is the cytoplasm. It carries out the reaction AMP + ATP = 2 ADP. It participates in purine metabolism; AMP biosynthesis via salvage pathway; AMP from ADP: step 1/1. Catalyzes the reversible transfer of the terminal phosphate group between ATP and AMP. Plays an important role in cellular energy homeostasis and in adenine nucleotide metabolism. The sequence is that of Adenylate kinase from Delftia acidovorans (strain DSM 14801 / SPH-1).